The following is a 263-amino-acid chain: Cell division protein DivIB (263 aa).

The Cytoplasmic segment spans residues 1–32 (MNPGQDREKIVNIEERIPKIKEQRKQKANRRL). A helical membrane pass occupies residues 33 to 53 (ISFIMLFFIMVLIIVYLQTPI). The segment at 51 to 123 (TPISKVSTIS…NKINIAIEEY (73 aa)) is alpha. The POTRA domain maps to 54–123 (SKVSTISVTG…NKINIAIEEY (70 aa)). Residues 54–263 (SKVSTISVTG…DKAAKKEDEN (210 aa)) are Extracellular-facing. Positions 124–251 (KAIAYLEKDD…EVATYFEEFG (128 aa)) are beta. Positions 229–263 (SQLSSNKKGIIHLEVATYFEEFGKNDKAAKKEDEN) are gamma.

The protein belongs to the FtsQ/DivIB family. DivIB subfamily. In terms of assembly, interacts with FtsL, DivIC and PBP-2B.

The protein localises to the cell membrane. In terms of biological role, cell division protein that may be involved in stabilizing or promoting the assembly of the division complex. Plays an essential role in division at high temperatures, maybe by protecting FtsL from degradation or by promoting formation of the FtsL-DivIC complex. May modulate the transpeptidase activity of PBP-2B. Also required for efficient sporulation at all temperatures. Could be directly involved in the engulfment process or be required to form a sporulation septum competent for engulfment. Influences the Spo0J/Soj system of chromosome segregation. This chain is Cell division protein DivIB, found in Bacillus subtilis (strain 168).